Here is a 340-residue protein sequence, read N- to C-terminus: Phenylalanine--tRNA ligase alpha subunit (340 aa).

Mg(2+) is bound at residue E255.

Belongs to the class-II aminoacyl-tRNA synthetase family. Phe-tRNA synthetase alpha subunit type 1 subfamily. Tetramer of two alpha and two beta subunits. Mg(2+) serves as cofactor.

The protein resides in the cytoplasm. It catalyses the reaction tRNA(Phe) + L-phenylalanine + ATP = L-phenylalanyl-tRNA(Phe) + AMP + diphosphate + H(+). This chain is Phenylalanine--tRNA ligase alpha subunit, found in Moorella thermoacetica (strain ATCC 39073 / JCM 9320).